Consider the following 437-residue polypeptide: Eukaryotic peptide chain release factor subunit 1 (437 aa).

At alanine 2 the chain carries N-acetylalanine. The NIKS motif; plays an important role in translational termination signature appears at 61–64 (NIKS). Lysine 63 bears the 4-hydroxylysine mark. Lysine 87 is covalently cross-linked (Glycyl lysine isopeptide (Lys-Gly) (interchain with G-Cter in SUMO2)). Glutamine 185 is modified (N5-methylglutamine). Threonine 347 carries the phosphothreonine modification. A Glycyl lysine isopeptide (Lys-Gly) (interchain with G-Cter in SUMO2) cross-link involves residue lysine 404.

This sequence belongs to the eukaryotic release factor 1 family. As to quaternary structure, component of the eRF1-eRF3-GTP ternary complex, composed of ETF1/ERF1 and eRF3 (GSPT1/ERF3A or GSPT2/ERF3B) and GTP. Component of the transient SURF (SMG1-UPF1-eRF1-eRF3) complex. Interacts with JMJD4. The ETF1-GSPT1 complex interacts with JMJD4. Post-translationally, hydroxylation at Lys-63 by JMJD4 promotes its translational termination efficiency. In terms of processing, methylated at Gln-185 by N6AMT1. Ubiquitinated via 'Lys-6'-linked polyubiquitin chains by RNF14 and RNF25 in response to ribosome collisions (ribosome stalling), leading to its degradation by the proteasome and rescue of stalled ribosomes.

Its subcellular location is the cytoplasm. Its function is as follows. Component of the eRF1-eRF3-GTP ternary complex, a ternary complex that mediates translation termination in response to the termination codons. The eRF1-eRF3-GTP complex binds to a stop codon in the ribosomal A-site. ETF1/ERF1 is responsible for stop codon recognition and inducing hydrolysis of peptidyl-tRNA. Following GTP hydrolysis, eRF3 (GSPT1/ERF3A or GSPT2/ERF3B) dissociates, permitting ETF1/eRF1 to accommodate fully in the A-site, followed by hydrolysis of peptidyl-tRNA. Component of the transient SURF complex which recruits UPF1 to stalled ribosomes in the context of nonsense-mediated decay (NMD) of mRNAs containing premature stop codons. Required for SHFL-mediated translation termination which inhibits programmed ribosomal frameshifting (-1PRF) of mRNA from viruses and cellular genes. The sequence is that of Eukaryotic peptide chain release factor subunit 1 (ETF1) from Pongo abelii (Sumatran orangutan).